Here is a 147-residue protein sequence, read N- to C-terminus: MVHLSAEEKGHINAIWSKVSVDQTGAEALGRLLIVYPWTSRFFDHFGDLSSAKGVMGNAKVQGHGAKVLTSFGDAVKNMDNLKGTFAKLSELHCDKLHVDPENFRLLGNILVICLAEHFGKDFTPEVQAAWQKLVAGVATALAHKYH.

At Val2 the chain carries N-acetylvaline. The region spanning 3 to 147 is the Globin domain; the sequence is HLSAEEKGHI…VATALAHKYH (145 aa). Lys60 carries the N6-acetyllysine modification. His64 lines the heme b pocket. Lys83 carries the N6-acetyllysine modification. His93 is a heme b binding site. The residue at position 94 (Cys94) is an S-nitrosocysteine. Lys145 carries the post-translational modification N6-acetyllysine.

Belongs to the globin family. Heterotetramer of two alpha chains and two beta chains. In terms of tissue distribution, red blood cells.

Its function is as follows. Involved in oxygen transport from the lung to the various peripheral tissues. The sequence is that of Hemoglobin subunit beta (HBB) from Sminthopsis crassicaudata (Fat-tailed dunnart).